The chain runs to 302 residues: Dioxygenase ALT11 (302 aa).

The tract at residues 1 to 22 (MSSPELPSQMGVPNGHTKLQEV) is disordered. Fe cation-binding residues include His147, Asp149, and His223.

The protein belongs to the PhyH family. As to quaternary structure, homodimer. It depends on Fe cation as a cofactor.

The protein operates within mycotoxin biosynthesis. Dioxygenase; part of the gene cluster that mediates the biosynthesis of the host-selective toxins (HSTs) AAL-toxins, sphinganine-analog mycotoxins responsible for Alternaria stem canker on tomato by the tomato pathotype. The biosynthesis starts with the polyketide synthase ALT1-catalyzed C-16 carbon chain assembly from one starter acetyl-CoA unit with malonyl-CoA extender units. ALT1 also selectively transfers methyl groups at the first and the third cycle of chain elongation for AAL toxin. The C-16 polyketide chain is released from the enzyme by a nucleophilic attack of a carbanion, which is derived from R-carbon of glycin by decarboxylation, on the carbonyl carbon of polyketide acyl chain. This step is probably catalyzed by a pyridoxal 5'-phosphate-dependent aminoacyl transferase ALT4. The respective functions of the other enzymes encoded by the cluster have still to be elucidated. The sphingosine N-acyltransferase-like protein ALT7 seems not to act as a resistance/self-tolerance factor against the toxin in the toxin biosynthetic gene cluster, contrary to what is expected. In Alternaria alternata (Alternaria rot fungus), this protein is Dioxygenase ALT11.